A 239-amino-acid chain; its full sequence is Tumor protein p53-inducible nuclear protein 1 (239 aa).

Positions 25–37 (EKEDDEWILVDFI) match the LIR motif.

As to quaternary structure, interacts with p53/TP53 and HIPK2. Interacts with PRKCG, GABARAP, GABARAPL1, GABARAPL2, MAP1LC3A, MAP1LC3B and MAP1LC3C. Specifically expressed by acinar cells of chronic pancreatitis tissue.

The protein localises to the cytoplasm. It localises to the cytosol. It is found in the nucleus. The protein resides in the PML body. Its subcellular location is the cytoplasmic vesicle. The protein localises to the autophagosome. Antiproliferative and proapoptotic protein involved in cell stress response which acts as a dual regulator of transcription and autophagy. Acts as a positive regulator of autophagy. In response to cellular stress or activation of autophagy, relocates to autophagosomes where it interacts with autophagosome-associated proteins GABARAP, GABARAPL1/L2, MAP1LC3A/B/C and regulates autophagy. Acts as an antioxidant and plays a major role in p53/TP53-driven oxidative stress response. Possesses both a p53/TP53-independent intracellular reactive oxygen species (ROS) regulatory function and a p53/TP53-dependent transcription regulatory function. Positively regulates p53/TP53 and p73/TP73 and stimulates their capacity to induce apoptosis and regulate cell cycle. In response to double-strand DNA breaks, promotes p53/TP53 phosphorylation on 'Ser-46' and subsequent apoptosis. Acts as a tumor suppressor by inducing cell death by an autophagy and caspase-dependent mechanism. Can reduce cell migration by regulating the expression of SPARC. This Rattus norvegicus (Rat) protein is Tumor protein p53-inducible nuclear protein 1 (Trp53inp1).